Reading from the N-terminus, the 148-residue chain is Snaclec 2 (148 aa).

Residues 1-23 (MGRFIFVSFGLLVVFLSLSGTEA) form the signal peptide. 3 disulfide bridges follow: Cys-27-Cys-38, Cys-55-Cys-144, and Cys-121-Cys-136. In terms of domain architecture, C-type lectin spans 34–145 (YDQNCYKAFE…CSGTHSFVCK (112 aa)).

This sequence belongs to the snaclec family. In terms of assembly, heterodimer; disulfide-linked. In terms of tissue distribution, expressed by the venom gland.

Its subcellular location is the secreted. Its function is as follows. Interferes with one step of hemostasis (modulation of platelet aggregation, or coagulation cascade, for example). This chain is Snaclec 2, found in Echis ocellatus (Ocellated saw-scaled viper).